The following is a 224-amino-acid chain: Cell division protein SepF (224 aa).

Residues 21–78 are disordered; sequence DDYYEDDDRGPAPRGYRRPREDRFEDEGYAPRGYDGHPEDRRRDYDEPPAYRAGLAGG. Positions 54 to 66 are enriched in basic and acidic residues; it reads YDGHPEDRRRDYD.

It belongs to the SepF family. Homodimer. Interacts with FtsZ.

It is found in the cytoplasm. Functionally, cell division protein that is part of the divisome complex and is recruited early to the Z-ring. Probably stimulates Z-ring formation, perhaps through the cross-linking of FtsZ protofilaments. Its function overlaps with FtsA. This chain is Cell division protein SepF, found in Mycolicibacterium gilvum (strain PYR-GCK) (Mycobacterium gilvum (strain PYR-GCK)).